Consider the following 467-residue polypeptide: UDP-N-acetylmuramate--L-alanine ligase (467 aa).

Position 112 to 118 (112 to 118 (GTHGKTT)) interacts with ATP.

This sequence belongs to the MurCDEF family.

Its subcellular location is the cytoplasm. The catalysed reaction is UDP-N-acetyl-alpha-D-muramate + L-alanine + ATP = UDP-N-acetyl-alpha-D-muramoyl-L-alanine + ADP + phosphate + H(+). It participates in cell wall biogenesis; peptidoglycan biosynthesis. Its function is as follows. Cell wall formation. This Polaromonas sp. (strain JS666 / ATCC BAA-500) protein is UDP-N-acetylmuramate--L-alanine ligase.